Reading from the N-terminus, the 480-residue chain is Bifunctional pantoate ligase/cytidylate kinase (480 aa).

Positions 1–243 are pantoate--beta-alanine ligase; that stretch reads MPTMGGLHQG…CGTTRLIDHV (243 aa). 4-11 contributes to the ATP binding site; sequence MGGLHQGH. His11 serves as the catalytic Proton donor. Gln34 provides a ligand contact to (R)-pantoate. A beta-alanine-binding site is contributed by Gln34. 123–126 contacts ATP; the sequence is GEKD. Gln129 is a binding site for (R)-pantoate. ATP-binding positions include Val152 and 160–163; that span reads LSSR. Residues 244-480 form a cytidylate kinase region; the sequence is FLMTRQPLVA…GEEAWPTPAG (237 aa).

It in the N-terminal section; belongs to the pantothenate synthetase family. In the C-terminal section; belongs to the cytidylate kinase family. Type 1 subfamily.

Its subcellular location is the cytoplasm. It carries out the reaction (R)-pantoate + beta-alanine + ATP = (R)-pantothenate + AMP + diphosphate + H(+). It catalyses the reaction CMP + ATP = CDP + ADP. The catalysed reaction is dCMP + ATP = dCDP + ADP. The protein operates within cofactor biosynthesis; (R)-pantothenate biosynthesis; (R)-pantothenate from (R)-pantoate and beta-alanine: step 1/1. Catalyzes the condensation of pantoate with beta-alanine in an ATP-dependent reaction via a pantoyl-adenylate intermediate. Its function is as follows. Catalyzes the transfer of a phosphate group from ATP to either CMP or dCMP to form CDP or dCDP and ADP, respectively. This chain is Bifunctional pantoate ligase/cytidylate kinase, found in Synechococcus sp. (strain CC9605).